The primary structure comprises 113 residues: Iron-sulfur cluster insertion protein ErpA (113 aa).

Residues Cys-41, Cys-105, and Cys-107 each contribute to the iron-sulfur cluster site.

This sequence belongs to the HesB/IscA family. In terms of assembly, homodimer. Iron-sulfur cluster serves as cofactor.

Functionally, required for insertion of 4Fe-4S clusters for at least IspG. The chain is Iron-sulfur cluster insertion protein ErpA from Mannheimia succiniciproducens (strain KCTC 0769BP / MBEL55E).